The following is a 506-amino-acid chain: Cysteine--tRNA ligase (506 aa).

Cys-34 serves as a coordination point for Zn(2+). The short motif at 36 to 46 (PTVYDFAHIGN) is the 'HIGH' region element. 3 residues coordinate Zn(2+): Cys-230, His-269, and Glu-273. Positions 302-306 (KMSKS) match the 'KMSKS' region motif. Lys-305 contributes to the ATP binding site.

Belongs to the class-I aminoacyl-tRNA synthetase family. In terms of assembly, monomer. It depends on Zn(2+) as a cofactor.

The protein resides in the cytoplasm. The catalysed reaction is tRNA(Cys) + L-cysteine + ATP = L-cysteinyl-tRNA(Cys) + AMP + diphosphate. In Brucella ovis (strain ATCC 25840 / 63/290 / NCTC 10512), this protein is Cysteine--tRNA ligase.